An 825-amino-acid polypeptide reads, in one-letter code: MRISLKWLRELVDFELSPEELAEALTLVGFEVEEIEDRRSWAEGVVLGRILAAEPHPNADKLRVCQVDLGSEQPATIVCGAANARAGLLVPVATPGTHLPAVNLTIAKAEKRGVLSEGMICSLAELGLERASEGIHEFPPDLDLKAHPLGSDARPLLGLDDVVLDLTSTANRADALSMVGIAREVAALTRNPLRLPPVQPLQAKPIPNFNLRIADAKACPAYSGVLIEGVKVGPSPDWLKHRLAAAGMRSINNVVDVTNLILLEWGQPLHAFDWDRLLQVMGKKKPTIEVRFAQAGETLKTLDGQTRTLHPESHLIVAGGQPVALAGVMGGEETEVSSATTSIFLEAALFDPVVTRRSARSQGLRTEASARYERGVNFATLDLARDRAVQLILELAGGSVVGLTTFDQRPPLERTLKLRLSRLIDVLGEEVRPEDVEEILPALGFQLSRCQAVAPEAPPLPATETAGVAGCVWQVSVPPYRLRDVEREIDLIEEFARLYGYDRFSETLPTEPQVGSLSARETLTRQIREVMRGIGLTEVYHISLCPAEEDSSLVKIANPLSPEYSAVRKALLPGLVEAFRFNWDQGNGPLQAFEIGHVFAYAPPSSPEPYQEAEHLGGILGGDLNPNDWRHHSRPMDWFEAKGLLVSALERLGFTSEFRPDPPEAQSPLLHPGRQAGIWIEGSRIGLFGQLHPRLCQEKDLPEEVYGFEVDLDPLLASLEKRGLVQFSPFSPFPASDRDIAFFAPLELSVADIEKVIRQAAGPLLQSVQLFDEYRGQGVPPGQRSLAFRLVYRAPDRTLTDAEVEAAQNQVRAQLEKHFPVTLRS.

The 116-residue stretch at 39 to 154 folds into the tRNA-binding domain; that stretch reads RSWAEGVVLG…KAHPLGSDAR (116 aa). The B5 domain maps to 411-506; it reads PLERTLKLRL…RLYGYDRFSE (96 aa). Residues Asp-484, Asp-490, Glu-493, and Glu-494 each coordinate Mg(2+). The FDX-ACB domain occupies 731 to 824; sequence SPFPASDRDI…LEKHFPVTLR (94 aa).

The protein belongs to the phenylalanyl-tRNA synthetase beta subunit family. Type 1 subfamily. In terms of assembly, tetramer of two alpha and two beta subunits. Mg(2+) serves as cofactor.

It is found in the cytoplasm. The enzyme catalyses tRNA(Phe) + L-phenylalanine + ATP = L-phenylalanyl-tRNA(Phe) + AMP + diphosphate + H(+). The polypeptide is Phenylalanine--tRNA ligase beta subunit (Synechococcus sp. (strain JA-3-3Ab) (Cyanobacteria bacterium Yellowstone A-Prime)).